We begin with the raw amino-acid sequence, 327 residues long: Interleukin-12 subunit beta (327 aa).

The signal sequence occupies residues 1-22 (MHPQQLVVSWFSLVLLASPIVA). The Ig-like C2-type domain maps to 23–106 (IWELEKNVYV…LSRSLLLLHK (84 aa)). C50 and C90 are disulfide-bonded. The N-linked (GlcNAc...) asparagine glycan is linked to N223. The 90-residue stretch at 238-327 (PPKNLQLRPL…WSEWASVSCS (90 aa)) folds into the Fibronectin type-III domain.

It belongs to the IL-12B family. In terms of assembly, heterodimer with IL12A; disulfide-linked. The heterodimer is known as interleukin IL-12. Heterodimer with IL23A; disulfide-linked. The heterodimer is known as interleukin IL-23. Also secreted as a monomer. Interacts with NBR1; this interaction promotes IL-12 secretion.

Its subcellular location is the secreted. Cytokine that can act as a growth factor for activated T and NK cells, enhance the lytic activity of NK/lymphokine-activated killer cells, and stimulate the production of IFN-gamma by resting PBMC. Its function is as follows. Associates with IL23A to form the IL-23 interleukin, a heterodimeric cytokine which functions in innate and adaptive immunity. IL-23 may constitute with IL-17 an acute response to infection in peripheral tissues. IL-23 binds to a heterodimeric receptor complex composed of IL12RB1 and IL23R, activates the Jak-Stat signaling cascade, stimulates memory rather than naive T-cells and promotes production of pro-inflammatory cytokines. IL-23 induces autoimmune inflammation and thus may be responsible for autoimmune inflammatory diseases and may be important for tumorigenesis. The protein is Interleukin-12 subunit beta (IL12B) of Capra hircus (Goat).